A 233-amino-acid polypeptide reads, in one-letter code: Biosynthetic peptidoglycan transglycosylase (233 aa).

The chain crosses the membrane as a helical span at residues 8 to 28 (LIALPVGIFIFFNAYVYGNII).

Belongs to the glycosyltransferase 51 family.

Its subcellular location is the cell inner membrane. It carries out the reaction [GlcNAc-(1-&gt;4)-Mur2Ac(oyl-L-Ala-gamma-D-Glu-L-Lys-D-Ala-D-Ala)](n)-di-trans,octa-cis-undecaprenyl diphosphate + beta-D-GlcNAc-(1-&gt;4)-Mur2Ac(oyl-L-Ala-gamma-D-Glu-L-Lys-D-Ala-D-Ala)-di-trans,octa-cis-undecaprenyl diphosphate = [GlcNAc-(1-&gt;4)-Mur2Ac(oyl-L-Ala-gamma-D-Glu-L-Lys-D-Ala-D-Ala)](n+1)-di-trans,octa-cis-undecaprenyl diphosphate + di-trans,octa-cis-undecaprenyl diphosphate + H(+). It functions in the pathway cell wall biogenesis; peptidoglycan biosynthesis. Its function is as follows. Peptidoglycan polymerase that catalyzes glycan chain elongation from lipid-linked precursors. The chain is Biosynthetic peptidoglycan transglycosylase from Neisseria meningitidis serogroup A / serotype 4A (strain DSM 15465 / Z2491).